The primary structure comprises 175 residues: Putative metal-dependent hydrolase BPUM_0784 (175 aa).

Histidine 65, histidine 157, and histidine 161 together coordinate Zn(2+).

Belongs to the metal hydrolase YfiT family. As to quaternary structure, homodimer. Zn(2+) serves as cofactor.

It localises to the cytoplasm. In terms of biological role, possible metal-dependent hydrolase. This is Putative metal-dependent hydrolase BPUM_0784 from Bacillus pumilus (strain SAFR-032).